A 334-amino-acid chain; its full sequence is Cytochrome c biogenesis protein CcsA (334 aa).

8 helical membrane passes run 12–32 (NTAF…VVFP), 35–55 (WLVQ…TALL), 67–87 (ISNL…VHFI), 96–116 (FVGA…ALTL), 141–161 (VMMV…AFLF), 242–262 (IIGL…VWAN), 277–297 (WALI…TKGW), and 303–323 (AILA…VNLL).

This sequence belongs to the CcmF/CycK/Ccl1/NrfE/CcsA family. In terms of assembly, may interact with ccs1.

It localises to the cellular thylakoid membrane. Required during biogenesis of c-type cytochromes (cytochrome c6 and cytochrome f) at the step of heme attachment. The polypeptide is Cytochrome c biogenesis protein CcsA (Synechocystis sp. (strain ATCC 27184 / PCC 6803 / Kazusa)).